We begin with the raw amino-acid sequence, 198 residues long: Probable chorismate pyruvate-lyase (198 aa).

Residues Arg73, Leu111, and Glu172 each contribute to the substrate site.

This sequence belongs to the UbiC family.

Its subcellular location is the cytoplasm. The enzyme catalyses chorismate = 4-hydroxybenzoate + pyruvate. Its pathway is cofactor biosynthesis; ubiquinone biosynthesis. Its function is as follows. Removes the pyruvyl group from chorismate, with concomitant aromatization of the ring, to provide 4-hydroxybenzoate (4HB) for the ubiquinone pathway. The protein is Probable chorismate pyruvate-lyase of Burkholderia orbicola (strain AU 1054).